Consider the following 173-residue polypeptide: Translation initiation factor IF-3 (173 aa).

It belongs to the IF-3 family. As to quaternary structure, monomer.

Its subcellular location is the cytoplasm. IF-3 binds to the 30S ribosomal subunit and shifts the equilibrium between 70S ribosomes and their 50S and 30S subunits in favor of the free subunits, thus enhancing the availability of 30S subunits on which protein synthesis initiation begins. The polypeptide is Translation initiation factor IF-3 (Campylobacter lari (strain RM2100 / D67 / ATCC BAA-1060)).